Reading from the N-terminus, the 909-residue chain is Phosphoenolpyruvate carboxylase (909 aa).

Residues His151 and Lys578 contribute to the active site.

The protein belongs to the PEPCase type 1 family. Requires Mg(2+) as cofactor.

The catalysed reaction is oxaloacetate + phosphate = phosphoenolpyruvate + hydrogencarbonate. Functionally, forms oxaloacetate, a four-carbon dicarboxylic acid source for the tricarboxylic acid cycle. In Caulobacter vibrioides (strain ATCC 19089 / CIP 103742 / CB 15) (Caulobacter crescentus), this protein is Phosphoenolpyruvate carboxylase.